The sequence spans 468 residues: Serine--tRNA ligase (468 aa).

Position 272-274 (Thr272–Glu274) interacts with L-serine. Residue Arg303–Glu305 participates in ATP binding. Residue Glu326 participates in L-serine binding. Glu390–Ser393 contacts ATP. Ser426 is a binding site for L-serine.

Belongs to the class-II aminoacyl-tRNA synthetase family. Type-1 seryl-tRNA synthetase subfamily. As to quaternary structure, homodimer. The tRNA molecule binds across the dimer.

It is found in the cytoplasm. The catalysed reaction is tRNA(Ser) + L-serine + ATP = L-seryl-tRNA(Ser) + AMP + diphosphate + H(+). The enzyme catalyses tRNA(Sec) + L-serine + ATP = L-seryl-tRNA(Sec) + AMP + diphosphate + H(+). Its pathway is aminoacyl-tRNA biosynthesis; selenocysteinyl-tRNA(Sec) biosynthesis; L-seryl-tRNA(Sec) from L-serine and tRNA(Sec): step 1/1. Functionally, catalyzes the attachment of serine to tRNA(Ser). Is also able to aminoacylate tRNA(Sec) with serine, to form the misacylated tRNA L-seryl-tRNA(Sec), which will be further converted into selenocysteinyl-tRNA(Sec). The chain is Serine--tRNA ligase from Xanthobacter autotrophicus (strain ATCC BAA-1158 / Py2).